Consider the following 125-residue polypeptide: Fatty acid-binding protein, liver-type (125 aa).

Belongs to the calycin superfamily. Fatty-acid binding protein (FABP) family.

The protein resides in the cytoplasm. The polypeptide is Fatty acid-binding protein, liver-type (fabp1) (Takifugu rubripes (Japanese pufferfish)).